The primary structure comprises 712 residues: U11/U12 small nuclear ribonucleoprotein 48 kDa protein (712 aa).

Residues 98–125 (FVRCPFDSNHFMPPEALFLHSLRCPNTL) form a CHHC U11-48K-type zinc finger. Residues C101, H107, H117, and C121 each contribute to the Zn(2+) site. The tract at residues 562 to 712 (QSRSPIGNDQ…EDRYIPTEKE (151 aa)) is disordered. Basic and acidic residues-rich tracts occupy residues 585–595 (KQWKGENRADI), 603–614 (QNSDKVKRHDEY), 629–663 (KHSD…HSIE), 672–693 (SSRE…DRRS), and 702–712 (FEDRYIPTEKE).

In terms of assembly, component of the U11/U12 snRNPs that are part of the U12-type spliceosome. Not found in the major spliceosome.

Its subcellular location is the nucleus. Likely involved in U12-type 5' splice site recognition. This Arabidopsis thaliana (Mouse-ear cress) protein is U11/U12 small nuclear ribonucleoprotein 48 kDa protein (SNRNP48).